The sequence spans 332 residues: MSKLPLLPTTVIGSYPRPKWLRESIRLHKAGKISDEDLQEAFNDAVIAVLKDHYNAGVDVPTDGEVRRDEMVEFFAERIKGFKFYGPVRVWGTAYYRKPSVVSKIEYKKPMLVDEFTFAKSVSYTDNLKITITGPYTIVEWSYNEYYKNKKDLVFDLAKAINQEIKNLVEAGAKIIQIDEPALHTRREDVSWGVEAVNEAVKGVNAKLVMHICYGEYSFVAPYLNELKVDQINFAFKIYNYKPLELLKRYGFDKELGAGVIDVHNRRIETSEEVANDIRKILEYFTPEKLWINPDCGLKLLSRKIAYQKLVSMVEGTKVVREELKRKGYSVD.

Residues histidine 211, cysteine 213, and cysteine 296 each coordinate Zn(2+).

Belongs to the archaeal MetE family. Requires Zn(2+) as cofactor.

It participates in amino-acid biosynthesis; L-methionine biosynthesis via de novo pathway. In terms of biological role, catalyzes the transfer of a methyl group to L-homocysteine resulting in methionine formation. The physiological methyl donor is unknown. This is Methionine synthase from Saccharolobus islandicus (strain Y.G.57.14 / Yellowstone #1) (Sulfolobus islandicus).